The chain runs to 172 residues: Acidic proline-rich protein PRP25 (172 aa).

The signal sequence occupies residues 1-16; that stretch reads MLVVLFTAVLLTLSYA. Residues 22 to 172 form a disordered region; that stretch reads ELQILDQTPN…QQGPPPPGGP (151 aa). The segment covering 32 to 44 has biased composition (pro residues); sequence QKPPPPGFPPRPP. A compositionally biased stretch (low complexity) spans 57–67; it reads GPQQSPLQPGK. Composition is skewed to pro residues over residues 68–137 and 145–172; these read PQDP…PQQK and QGPP…PGGP.

It is found in the secreted. This Rattus norvegicus (Rat) protein is Acidic proline-rich protein PRP25.